Reading from the N-terminus, the 218-residue chain is Ras-related protein RABA1i (218 aa).

GTP is bound at residue 20–27 (GDSGVGKS). The Effector region motif lies at 42–50 (SRATIGVEF). GTP is bound by residues 68 to 72 (DTAGQ), 126 to 129 (NKAD), and 156 to 157 (SA). S-geranylgeranyl cysteine attachment occurs at residues cysteine 215 and cysteine 216.

The protein belongs to the small GTPase superfamily. Rab family.

The protein localises to the cell membrane. Its function is as follows. Intracellular vesicle trafficking and protein transport. This is Ras-related protein RABA1i (RABA1I) from Arabidopsis thaliana (Mouse-ear cress).